We begin with the raw amino-acid sequence, 273 residues long: Dermonecrotic toxin LsaSicTox-alphaIB1bii (273 aa).

Residue His5 is part of the active site. Mg(2+)-binding residues include Glu25 and Asp27. His41 serves as the catalytic Nucleophile. 2 cysteine pairs are disulfide-bonded: Cys45-Cys51 and Cys47-Cys190. Asp85 contributes to the Mg(2+) binding site.

This sequence belongs to the arthropod phospholipase D family. Class II subfamily. It depends on Mg(2+) as a cofactor. As to expression, expressed by the venom gland.

The protein localises to the secreted. It catalyses the reaction an N-(acyl)-sphingosylphosphocholine = an N-(acyl)-sphingosyl-1,3-cyclic phosphate + choline. It carries out the reaction an N-(acyl)-sphingosylphosphoethanolamine = an N-(acyl)-sphingosyl-1,3-cyclic phosphate + ethanolamine. The catalysed reaction is a 1-acyl-sn-glycero-3-phosphocholine = a 1-acyl-sn-glycero-2,3-cyclic phosphate + choline. The enzyme catalyses a 1-acyl-sn-glycero-3-phosphoethanolamine = a 1-acyl-sn-glycero-2,3-cyclic phosphate + ethanolamine. In terms of biological role, dermonecrotic toxins cleave the phosphodiester linkage between the phosphate and headgroup of certain phospholipids (sphingolipid and lysolipid substrates), forming an alcohol (often choline) and a cyclic phosphate. This toxin acts on sphingomyelin (SM). It may also act on ceramide phosphoethanolamine (CPE), lysophosphatidylcholine (LPC) and lysophosphatidylethanolamine (LPE), but not on lysophosphatidylserine (LPS), and lysophosphatidylglycerol (LPG). It acts by transphosphatidylation, releasing exclusively cyclic phosphate products as second products. Induces dermonecrosis, hemolysis, increased vascular permeability, edema, inflammatory response, and platelet aggregation. This is Dermonecrotic toxin LsaSicTox-alphaIB1bii from Loxosceles sabina (Tucson recluse spider).